A 157-amino-acid polypeptide reads, in one-letter code: MIIEKILGNLHQQPDAYASHHKEKVVLPSTLLVKRIQRVTTDHGKELGIRLPAGTGDLRDGDILAIDQHNIIVVSVLPTDVLVIKARTIHEMGVVAHSLGNRHLQAQFFDGSSEYGAEVMVCQYDHTVEDYLKSVGVPYDRQERVMPVPFRHAEHSH.

Belongs to the UreE family.

It is found in the cytoplasm. Involved in urease metallocenter assembly. Binds nickel. Probably functions as a nickel donor during metallocenter assembly. The polypeptide is Urease accessory protein UreE (Paenarthrobacter aurescens (strain TC1)).